Here is a 423-residue protein sequence, read N- to C-terminus: Phosphoribosylamine--glycine ligase (423 aa).

Residues K107–N312 form the ATP-grasp domain. L133–S193 provides a ligand contact to ATP. 3 residues coordinate Mg(2+): E270, E282, and N284. Mn(2+) contacts are provided by E270, E282, and N284.

This sequence belongs to the GARS family. It depends on Mg(2+) as a cofactor. The cofactor is Mn(2+).

The enzyme catalyses 5-phospho-beta-D-ribosylamine + glycine + ATP = N(1)-(5-phospho-beta-D-ribosyl)glycinamide + ADP + phosphate + H(+). It functions in the pathway purine metabolism; IMP biosynthesis via de novo pathway; N(1)-(5-phospho-D-ribosyl)glycinamide from 5-phospho-alpha-D-ribose 1-diphosphate: step 2/2. This is Phosphoribosylamine--glycine ligase from Phenylobacterium zucineum (strain HLK1).